The primary structure comprises 400 residues: MPVSHPTVYEPLTEQGAISLAVRLGLFPEGTPLACREIGDGNLNLVFRVVDQQTKKGIIVKQALPYAKVVGESWPLTLKRAVIESNALRTFASYVPQYVPKVYYSDESLAITVMEDLSHLQIARKGLIEGKTYPLLSQHIGEFIAKTSFYTSDFGMNQQEKKQLAQSFVNPELCKITEDLVFTDPFFNHETNNFEDELRDDVEALWNDDKLHLEAAKLKRKFLTEGDALIHGDLHTGSIFASDEETKIIDPEFAFYGPFGFDIGQFFANLLLNALSRPEQQQEPLFAHIDKTWDVFSTVFSDLWRTHNVEPYAKTEGLLEDVLHHTFIDAIGFAGCEVIRRTIGLAHVADLDGIEDKEERLQAKRYALRLGRSLILQRETLSSTKEIRSLFAQTVLAATN.

ATP-binding positions include N44, K61, and 115–117; that span reads EDL. Residue D233 coordinates substrate. Position 250–252 (250–252) interacts with ATP; that stretch reads DPE. R340 lines the substrate pocket.

Belongs to the methylthioribose kinase family. In terms of assembly, homodimer.

It carries out the reaction 5-(methylsulfanyl)-D-ribose + ATP = 5-(methylsulfanyl)-alpha-D-ribose 1-phosphate + ADP + H(+). The protein operates within amino-acid biosynthesis; L-methionine biosynthesis via salvage pathway; S-methyl-5-thio-alpha-D-ribose 1-phosphate from S-methyl-5'-thioadenosine (hydrolase route): step 2/2. Functionally, catalyzes the phosphorylation of methylthioribose into methylthioribose-1-phosphate. This is Methylthioribose kinase from Geobacillus sp. (strain WCH70).